Reading from the N-terminus, the 513-residue chain is MSDKLIIFDTTLRDGEQSPGASMTREEKIRIARQLERLKVDVIEAGFAASSNGDFEAIRSIAQVVKDSTICSLARANDKDIARAAEALKPANSFRIHTFIATSALHMEKKLRMTPDQVYEQARLAVRFARQFTDDIEFSPEDGSRSDMDFLCRVLEGVIAEGATTINLPDTVGYAVPEGYAELIRSVRERIPNSDKAVWSVHCHNDLGMAVANSLAAVKLGGARQIECTINGLGERAGNTSLEEVVMAVKTRRDYFNMDVGIDTTQIVPASKLVSQITGFVVQPNKAVVGANAFAHASGIHQDGVLKARDTYEIMRAEDVGWTANKIVLGKLSGRNAFKQRLQELGVQLESEAEINAAFARFKELADQKAEIFDEDIMAIVSDEEQEHANEHYRFISLSQRSETGERPHARVVFNIDGSEQTGEAEGNGPVDATLHAIEGKVNSGAELVLYSVNAITAGTQAQGEVTVRLSKAGRIVNGVGTDPDIVAASAKAYLAALNKLHDKAVQKINPQI.

A Pyruvate carboxyltransferase domain is found at 5–268 (LIIFDTTLRD…DVGIDTTQIV (264 aa)). Positions 14, 202, 204, and 239 each coordinate Mn(2+). Residues 394-513 (RFISLSQRSE…KAVQKINPQI (120 aa)) are regulatory domain.

It belongs to the alpha-IPM synthase/homocitrate synthase family. LeuA type 1 subfamily. As to quaternary structure, homodimer. It depends on Mn(2+) as a cofactor.

The protein resides in the cytoplasm. The catalysed reaction is 3-methyl-2-oxobutanoate + acetyl-CoA + H2O = (2S)-2-isopropylmalate + CoA + H(+). The protein operates within amino-acid biosynthesis; L-leucine biosynthesis; L-leucine from 3-methyl-2-oxobutanoate: step 1/4. In terms of biological role, catalyzes the condensation of the acetyl group of acetyl-CoA with 3-methyl-2-oxobutanoate (2-ketoisovalerate) to form 3-carboxy-3-hydroxy-4-methylpentanoate (2-isopropylmalate). This chain is 2-isopropylmalate synthase, found in Cupriavidus metallidurans (strain ATCC 43123 / DSM 2839 / NBRC 102507 / CH34) (Ralstonia metallidurans).